The sequence spans 661 residues: Ubiquitin carboxyl-terminal hydrolase 51 (661 aa).

A disordered region spans residues 1 to 144 (MRGTQGAQEM…SENSLLEVGS (144 aa)). Over residues 21-30 (TSENLTSRGS) the composition is skewed to polar residues. Positions 53-71 (PRRKPRPRPQPRSRSRGGR) are enriched in basic residues. The segment covering 75–96 (APPPPPAKPPPPPPAPPPPPLP) has biased composition (pro residues). The UBP-type zinc-finger motif lies at 149 to 267 (TGCCHVESFK…KETKEKILGL (119 aa)). Positions 151, 153, 192, 195, 205, 208, 213, 218, 222, 228, 241, and 244 each coordinate Zn(2+). Residues 320 to 656 (RGLINLGNTC…EGYLLFYHRQ (337 aa)) form the USP domain. Catalysis depends on Cys-329, which acts as the Nucleophile. The Proton acceptor role is filled by His-615.

The protein belongs to the peptidase C19 family. In terms of assembly, interacts with H2A.

Its subcellular location is the chromosome. It carries out the reaction Thiol-dependent hydrolysis of ester, thioester, amide, peptide and isopeptide bonds formed by the C-terminal Gly of ubiquitin (a 76-residue protein attached to proteins as an intracellular targeting signal).. Its function is as follows. Specifically deubiquitinates 'Lys-14' (H2AK13Ub) and 'Lys-16'(H2AK15Ub) of histone H2A regulating the DNA damage response at double-strand breaks (DSBs). USP51 is recruited to chromatin after DNA damage and regulates the dynamic assembly/disassembly of TP53BP1 and BRCA1. Functions in DNA double-strand break repair also by mediating the deubiquitination and subsequent stabilization of DGCR8, leading to the recruitment of DGCR8 binding partners to double strand breaks such as RNF168 or MDC1. In addition, promotes the deubiquitination and stabilization of the transcriptional repressor ZEB1. The sequence is that of Ubiquitin carboxyl-terminal hydrolase 51 from Mus musculus (Mouse).